A 400-amino-acid polypeptide reads, in one-letter code: Enoyl-[acyl-carrier-protein] reductase [NADH] (400 aa).

NAD(+) is bound by residues 74–75 (FE), 111–112 (DA), and 139–140 (VA). Tyr-225 provides a ligand contact to substrate. The active-site Proton donor is Tyr-235. Residues Lys-244 and 273–275 (VVT) each bind NAD(+).

This sequence belongs to the TER reductase family. Monomer.

It catalyses the reaction a 2,3-saturated acyl-[ACP] + NAD(+) = a (2E)-enoyl-[ACP] + NADH + H(+). The protein operates within lipid metabolism; fatty acid biosynthesis. Its function is as follows. Involved in the final reduction of the elongation cycle of fatty acid synthesis (FAS II). Catalyzes the reduction of a carbon-carbon double bond in an enoyl moiety that is covalently linked to an acyl carrier protein (ACP). This is Enoyl-[acyl-carrier-protein] reductase [NADH] from Psychromonas ingrahamii (strain DSM 17664 / CCUG 51855 / 37).